A 1460-amino-acid chain; its full sequence is Actin cytoskeleton-regulatory complex protein PAN1 (1460 aa).

A compositionally biased stretch (low complexity) spans 1–56; the sequence is MYNPYQQQGMGYQQQQQQQQQQPNGFYPQQQQGQSSNQPQGQPQPQQQMAFNQPQA. Residues 1–151 form a disordered region; that stretch reads MYNPYQQQGM…SIQPQGTGYY (151 aa). Over residues 65-79 the composition is skewed to polar residues; the sequence is SFGNSFSTMPQQPQT. Low complexity-rich tracts occupy residues 80-110, 117-128, and 136-146; these read GYNN…VKPQ, NSSMPMMNTTGT, and QQPQLQSIQPQ. 5 consecutive repeat copies span residues 142-153, 164-175, 188-199, 215-226, and 235-246. Residues 142–568 form a 15 X 12 AA tandem repeats of [SPNAG]-[IL]-[QKNGT]-[PSA]-[QT]-[GQAPISTLYK]-T-G-[YFGML]-[YVMGAQL]-[QVLNPAG]-[ASQPN] region; that stretch reads SIQPQGTGYY…TAQKTGFGNN (427 aa). Residues 185-197 show a composition bias toward polar residues; the sequence is TQQPLQAQGTGYY. The interval 185 to 214 is disordered; it reads TQQPLQAQGTGYYQSQPQQVPPPQQAQSLQ. At threonine 241 the chain carries Phosphothreonine. EF-hand domains are found at residues 269–304 and 306–338; these read QDQA…SGLP and SQLA…INDV. An EH 1 domain is found at 270-359; sequence DQAKFETLFR…SKTKNEVSSF (90 aa). 11 consecutive repeat copies span residues 328–350, 392–403, 409–420, 422–433, 446–457, 467–478, 491–502, 503–511, 531–541, 542–549, and 557–568. The 2 X 23 AA repeats of F-A-L-[AG]-M-H-L-[IV]-[NY]-[DG]-[VK]-L-[QN]-G-[DK]-[TP]-I-P-[YN]-[EV]-L-[DP]-S stretch occupies residues 328–672; that stretch reads FALAMHLIND…GKPIPNVLPS (345 aa). Residue threonine 563 is modified to Phosphothreonine. The 89-residue stretch at 593–681 folds into the EH 2 domain; it reads EKSLFYKFLK…SSLIPSSTKL (89 aa). The EF-hand 3 domain maps to 625–660; that stretch reads LNRADLEQIWNLCDINNTGQLNKQEFALGMHLVYGK. Ca(2+) contacts are provided by aspartate 638, asparagine 640, threonine 642, glutamine 644, and glutamate 649. Residues 650–672 form a 2-2 repeat; sequence FALGMHLVYGKLNGKPIPNVLPS. 4 disordered regions span residues 729–758, 880–901, 969–1127, and 1149–1460; these read SAKN…TDDI, ALTG…QQSA, NSNK…EKRL, and LRKQ…PPLP. Residues 735–757 show a composition bias toward polar residues; it reads QSSFSSPSAKSVNHSSSTLQTDD. Phosphoserine occurs at positions 739 and 749. Over residues 888–899 the composition is skewed to acidic residues; it reads SEDSLSMEDEQQ. A compositionally biased stretch (low complexity) spans 973–988; that stretch reads SVTESSPFVPSSTPTP. Threonine 985 and threonine 987 each carry phosphothreonine. Serine 995 carries the post-translational modification Phosphoserine. The span at 1003-1030 shows a compositional bias: basic and acidic residues; that stretch reads TAEERAAYLKEQAKKRMKEKLAKFDKNR. Polar residues predominate over residues 1048–1058; sequence QPQQIAGSSNL. Repeat copies occupy residues 1076–1081, 1082–1087, 1088–1093, 1094–1099, and 1100–1105. Residues 1076 to 1105 are 5 X 6 AA tandem repeats of Q-[PS]-T-Q-P-V; sequence QPTQPVQSTQPVQPTQPVQPTQPVQPTQPV. Over residues 1076-1106 the composition is skewed to low complexity; that stretch reads QPTQPVQSTQPVQPTQPVQPTQPVQPTQPVQ. Positions 1111–1170 form a coiled coil; that stretch reads AKQESDDEDEDDEEKRLQEELKRLKLKKKADKEKRLAALRKQIEDAQNESDEEETNGKDN. A Phosphoserine modification is found at serine 1160. Residues 1175–1188 show a composition bias toward low complexity; the sequence is VNVPQAAPVAPSAA. Residues 1210–1221 show a composition bias toward polar residues; it reads KNSTGLPSTTMG. A compositionally biased stretch (low complexity) spans 1228–1239; that stretch reads DASASSTSTFDA. Residues serine 1230 and serine 1233 each carry the phosphoserine modification. Positions 1240–1252 are enriched in basic and acidic residues; it reads RAAEMQRRIQRGL. Residues 1253 to 1265 are compositionally biased toward acidic residues; sequence DEDEDDGWSDEDE. Residue serine 1261 is modified to Phosphoserine. Basic and acidic residues predominate over residues 1272 to 1288; that stretch reads VDNKVEEAKIGHPDHAR. Low complexity predominate over residues 1289-1298; it reads APPVTAAPLP. Repeat copies occupy residues 1295-1300, 1301-1306, 1307-1312, 1320-1325, 1326-1330, 1335-1340, 1341-1346, and 1352-1357. The interval 1295–1357 is 8 X 6 AA repeats of [ATVSP]-P-[LVI]-P-[SPQILA]-[VAS]; the sequence is APLPSVTPVP…GFQEPPIPSA (63 aa). Pro residues-rich tracts occupy residues 1299 to 1308 and 1323 to 1344; these read SVTPVPPAVP and PIAP…PPLP. Residue threonine 1301 is modified to Phosphothreonine. A compositionally biased stretch (pro residues) spans 1447-1460; it reads SIPPAGIPPPPPLP.

Belongs to the PAN1 family. As to quaternary structure, component of the PAN1 actin cytoskeleton-regulatory complex. Phosphorylated by PRK1 on threonine residues in the L-x-x-Q-x-T-G motif of repeats 1-6 to 1-15. Phosphorylated by ARK1.

Its subcellular location is the cell membrane. The protein localises to the endosome membrane. The protein resides in the cytoplasm. It localises to the cytoskeleton. It is found in the actin patch. Functionally, component of the PAN1 actin cytoskeleton-regulatory complex required for the internalization of endosomes during actin-coupled endocytosis. The complex links the site of endocytosis to the cell membrane-associated actin cytoskeleton. Mediates uptake of external molecules and vacuolar degradation of plasma membrane proteins. Plays a role in the proper organization of the cell membrane-associated actin cytoskeleton and promotes its destabilization. The polypeptide is Actin cytoskeleton-regulatory complex protein PAN1 (PAN1) (Saccharomyces cerevisiae (strain YJM789) (Baker's yeast)).